The sequence spans 378 residues: Lipid-A-disaccharide synthase (378 aa).

This sequence belongs to the LpxB family.

The enzyme catalyses a lipid X + a UDP-2-N,3-O-bis[(3R)-3-hydroxyacyl]-alpha-D-glucosamine = a lipid A disaccharide + UDP + H(+). It functions in the pathway bacterial outer membrane biogenesis; LPS lipid A biosynthesis. Functionally, condensation of UDP-2,3-diacylglucosamine and 2,3-diacylglucosamine-1-phosphate to form lipid A disaccharide, a precursor of lipid A, a phosphorylated glycolipid that anchors the lipopolysaccharide to the outer membrane of the cell. The polypeptide is Lipid-A-disaccharide synthase (Methylobacillus flagellatus (strain ATCC 51484 / DSM 6875 / VKM B-1610 / KT)).